The chain runs to 62 residues: Large ribosomal subunit protein eL19 (62 aa).

The protein belongs to the eukaryotic ribosomal protein eL19 family.

The polypeptide is Large ribosomal subunit protein eL19 (RPL19) (Zea mays (Maize)).